A 185-amino-acid chain; its full sequence is UPF0397 protein AYWB_013 (185 aa).

5 consecutive transmembrane segments (helical) span residues 13–33 (IGLS…PVGF), 42–62 (AFLA…VGLI), 69–89 (FFLF…IGFI), 109–129 (IVYF…FFAP), and 148–168 (FLIV…LMTI).

This sequence belongs to the UPF0397 family.

The protein localises to the cell membrane. This chain is UPF0397 protein AYWB_013, found in Aster yellows witches'-broom phytoplasma (strain AYWB).